Here is a 283-residue protein sequence, read N- to C-terminus: ATP phosphoribosyltransferase (283 aa).

This sequence belongs to the ATP phosphoribosyltransferase family. Long subfamily. It depends on Mg(2+) as a cofactor.

It is found in the cytoplasm. The enzyme catalyses 1-(5-phospho-beta-D-ribosyl)-ATP + diphosphate = 5-phospho-alpha-D-ribose 1-diphosphate + ATP. It functions in the pathway amino-acid biosynthesis; L-histidine biosynthesis; L-histidine from 5-phospho-alpha-D-ribose 1-diphosphate: step 1/9. Its activity is regulated as follows. Feedback inhibited by histidine. Functionally, catalyzes the condensation of ATP and 5-phosphoribose 1-diphosphate to form N'-(5'-phosphoribosyl)-ATP (PR-ATP). Has a crucial role in the pathway because the rate of histidine biosynthesis seems to be controlled primarily by regulation of HisG enzymatic activity. The protein is ATP phosphoribosyltransferase of Ignicoccus hospitalis (strain KIN4/I / DSM 18386 / JCM 14125).